The sequence spans 64 residues: Large ribosomal subunit protein bL32 (64 aa).

Residues 1–35 are disordered; the sequence is MAVQKSRVTPSRRGMRRAHDALSAKQLSTDPTTGE.

The protein belongs to the bacterial ribosomal protein bL32 family.

The protein is Large ribosomal subunit protein bL32 of Stenotrophomonas maltophilia (strain R551-3).